The following is a 176-amino-acid chain: DNA repair RAD52-like protein 1, mitochondrial (176 aa).

The transit peptide at 1–37 (MAGLGLRLKAAKWTLRSGSGAVSREWSSEMGKGVRRF) directs the protein to the mitochondrion.

Belongs to the RAD52 family. In terms of assembly, interacts with WHY2. As to expression, expressed in root vascular tissue, tips of primary and secondary roots, young leaves, hydathodes, stomatal guard cells, cauline leaves, flower buds, stipules, carpels, pistils and anther filaments.

It is found in the mitochondrion. The protein resides in the nucleus. In terms of biological role, plant-specific single-stranded DNA-binding protein required for efficient heterologous recombination-dependent DNA repair in nuclear and mitochondrial compartments. Forms large nucleo-protein complexes with WHY2 in mitochondria. Binds ssDNA with high affinity, but with little sequence specificity. Involved in double-stranded DNA break repair. Involved in the hydrolytic splicing pathway in mitochondrion. Facilitates the excision of two cis-spliced group II introns, NAD1 intron 2 and NAD2 intron 1. In Arabidopsis thaliana (Mouse-ear cress), this protein is DNA repair RAD52-like protein 1, mitochondrial.